A 125-amino-acid polypeptide reads, in one-letter code: Fluoride-specific ion channel FluC (125 aa).

The next 4 helical transmembrane spans lie at 4 to 24, 32 to 52, 68 to 88, and 100 to 120; these read ILLV…VGLW, AFPW…GFLA, FLIT…LDAI, and LAYI…GLAL. Na(+) is bound by residues Gly75 and Thr78.

Belongs to the fluoride channel Fluc/FEX (TC 1.A.43) family.

Its subcellular location is the cell inner membrane. The enzyme catalyses fluoride(in) = fluoride(out). With respect to regulation, na(+) is not transported, but it plays an essential structural role and its presence is essential for fluoride channel function. Functionally, fluoride-specific ion channel. Important for reducing fluoride concentration in the cell, thus reducing its toxicity. The polypeptide is Fluoride-specific ion channel FluC (Rhizobium meliloti (strain 1021) (Ensifer meliloti)).